A 396-amino-acid chain; its full sequence is Enoyl-[acyl-carrier-protein] reductase [NADH] (396 aa).

Residues 47-52 (GASTGF), 73-74 (FE), 110-111 (DA), and 138-139 (LA) each bind NAD(+). Tyr-224 lines the substrate pocket. Tyr-234 functions as the Proton donor in the catalytic mechanism. Residues Lys-243 and 272 to 274 (LVT) contribute to the NAD(+) site.

Belongs to the TER reductase family. In terms of assembly, monomer.

The enzyme catalyses a 2,3-saturated acyl-[ACP] + NAD(+) = a (2E)-enoyl-[ACP] + NADH + H(+). Its pathway is lipid metabolism; fatty acid biosynthesis. Involved in the final reduction of the elongation cycle of fatty acid synthesis (FAS II). Catalyzes the reduction of a carbon-carbon double bond in an enoyl moiety that is covalently linked to an acyl carrier protein (ACP). This is Enoyl-[acyl-carrier-protein] reductase [NADH] from Cytophaga hutchinsonii (strain ATCC 33406 / DSM 1761 / CIP 103989 / NBRC 15051 / NCIMB 9469 / D465).